The primary structure comprises 435 residues: UDP-N-acetylmuramate--L-alanine ligase (435 aa).

108–114 serves as a coordination point for ATP; the sequence is GSHGKTS.

This sequence belongs to the MurCDEF family.

It localises to the cytoplasm. It carries out the reaction UDP-N-acetyl-alpha-D-muramate + L-alanine + ATP = UDP-N-acetyl-alpha-D-muramoyl-L-alanine + ADP + phosphate + H(+). The protein operates within cell wall biogenesis; peptidoglycan biosynthesis. Its function is as follows. Cell wall formation. The sequence is that of UDP-N-acetylmuramate--L-alanine ligase from Shouchella clausii (strain KSM-K16) (Alkalihalobacillus clausii).